We begin with the raw amino-acid sequence, 474 residues long: 3-isopropylmalate dehydratase large subunit (474 aa).

[4Fe-4S] cluster contacts are provided by C355, C415, and C418.

It belongs to the aconitase/IPM isomerase family. LeuC type 1 subfamily. In terms of assembly, heterodimer of LeuC and LeuD. [4Fe-4S] cluster serves as cofactor.

The enzyme catalyses (2R,3S)-3-isopropylmalate = (2S)-2-isopropylmalate. It functions in the pathway amino-acid biosynthesis; L-leucine biosynthesis; L-leucine from 3-methyl-2-oxobutanoate: step 2/4. Its function is as follows. Catalyzes the isomerization between 2-isopropylmalate and 3-isopropylmalate, via the formation of 2-isopropylmaleate. The sequence is that of 3-isopropylmalate dehydratase large subunit from Shewanella sp. (strain MR-7).